We begin with the raw amino-acid sequence, 135 residues long: MTKSELVEKLAARFPQLLLRDADISVKTILDAMSEALADGHRIEIRGFGSFGLNKRPPRVGRNPKSGERVLVPEKRVPHFKAGKELRERVDRTVTQGGGMNGNGHAPHGKTGQSQLGSQSPASLHDDGQLNLVRS.

Positions 83-92 are enriched in basic and acidic residues; the sequence is GKELRERVDR. The tract at residues 83–135 is disordered; it reads GKELRERVDRTVTQGGGMNGNGHAPHGKTGQSQLGSQSPASLHDDGQLNLVRS. The span at 111-122 shows a compositional bias: polar residues; it reads TGQSQLGSQSPA.

It belongs to the bacterial histone-like protein family. Heterodimer of an alpha and a beta chain.

In terms of biological role, this protein is one of the two subunits of integration host factor, a specific DNA-binding protein that functions in genetic recombination as well as in transcriptional and translational control. This Cupriavidus metallidurans (strain ATCC 43123 / DSM 2839 / NBRC 102507 / CH34) (Ralstonia metallidurans) protein is Integration host factor subunit beta.